The primary structure comprises 178 residues: Large ribosomal subunit protein bL25 (178 aa).

It belongs to the bacterial ribosomal protein bL25 family. CTC subfamily. Part of the 50S ribosomal subunit; part of the 5S rRNA/L5/L18/L25 subcomplex. Contacts the 5S rRNA. Binds to the 5S rRNA independently of L5 and L18.

Its function is as follows. This is one of the proteins that binds to the 5S RNA in the ribosome where it forms part of the central protuberance. The chain is Large ribosomal subunit protein bL25 from Campylobacter jejuni subsp. jejuni serotype O:23/36 (strain 81-176).